The following is a 357-amino-acid chain: Holliday junction branch migration complex subunit RuvB (357 aa).

Over residues 1 to 15 (MAIQSDSLSSLPDSP) the composition is skewed to low complexity. A disordered region spans residues 1 to 30 (MAIQSDSLSSLPDSPRIVAPQPVSPNEESI). The tract at residues 13 to 195 (DSPRIVAPQP…FGIVSRLEFY (183 aa)) is large ATPase domain (RuvB-L). ATP is bound by residues L34, R35, G76, K79, T80, T81, 142-144 (EDF), R185, Y195, and R232. Position 80 (T80) interacts with Mg(2+). The interval 196–266 (NTDELARIVT…AAGRALAMLD (71 aa)) is small ATPAse domain (RuvB-S). The tract at residues 269 to 357 (PQGLDVMDRK…SGGTGELFSK (89 aa)) is head domain (RuvB-H). Positions 305, 324, and 329 each coordinate DNA.

The protein belongs to the RuvB family. Homohexamer. Forms an RuvA(8)-RuvB(12)-Holliday junction (HJ) complex. HJ DNA is sandwiched between 2 RuvA tetramers; dsDNA enters through RuvA and exits via RuvB. An RuvB hexamer assembles on each DNA strand where it exits the tetramer. Each RuvB hexamer is contacted by two RuvA subunits (via domain III) on 2 adjacent RuvB subunits; this complex drives branch migration. In the full resolvosome a probable DNA-RuvA(4)-RuvB(12)-RuvC(2) complex forms which resolves the HJ.

The protein resides in the cytoplasm. The enzyme catalyses ATP + H2O = ADP + phosphate + H(+). Its function is as follows. The RuvA-RuvB-RuvC complex processes Holliday junction (HJ) DNA during genetic recombination and DNA repair, while the RuvA-RuvB complex plays an important role in the rescue of blocked DNA replication forks via replication fork reversal (RFR). RuvA specifically binds to HJ cruciform DNA, conferring on it an open structure. The RuvB hexamer acts as an ATP-dependent pump, pulling dsDNA into and through the RuvAB complex. RuvB forms 2 homohexamers on either side of HJ DNA bound by 1 or 2 RuvA tetramers; 4 subunits per hexamer contact DNA at a time. Coordinated motions by a converter formed by DNA-disengaged RuvB subunits stimulates ATP hydrolysis and nucleotide exchange. Immobilization of the converter enables RuvB to convert the ATP-contained energy into a lever motion, pulling 2 nucleotides of DNA out of the RuvA tetramer per ATP hydrolyzed, thus driving DNA branch migration. The RuvB motors rotate together with the DNA substrate, which together with the progressing nucleotide cycle form the mechanistic basis for DNA recombination by continuous HJ branch migration. Branch migration allows RuvC to scan DNA until it finds its consensus sequence, where it cleaves and resolves cruciform DNA. This chain is Holliday junction branch migration complex subunit RuvB, found in Bordetella parapertussis (strain 12822 / ATCC BAA-587 / NCTC 13253).